We begin with the raw amino-acid sequence, 633 residues long: Probable potassium transport system protein Kup 3 (633 aa).

12 helical membrane passes run Leu-24–Phe-44, Val-61–Val-81, Leu-114–Ile-134, Pro-148–Val-168, Phe-180–Phe-200, Ile-222–Leu-242, Trp-258–Leu-278, Ile-298–Gly-318, Ile-348–Phe-368, Ala-377–Met-397, Leu-405–Ala-425, and Ile-427–Ile-447.

This sequence belongs to the HAK/KUP transporter (TC 2.A.72) family.

The protein resides in the cell inner membrane. The enzyme catalyses K(+)(in) + H(+)(in) = K(+)(out) + H(+)(out). Functionally, transport of potassium into the cell. Likely operates as a K(+):H(+) symporter. This chain is Probable potassium transport system protein Kup 3, found in Rhizobium johnstonii (strain DSM 114642 / LMG 32736 / 3841) (Rhizobium leguminosarum bv. viciae).